A 370-amino-acid chain; its full sequence is Chloromuconate cycloisomerase (370 aa).

Catalysis depends on Lys165, which acts as the Proton acceptor. Asp194, Glu220, and Asp245 together coordinate Mn(2+). The Proton donor role is filled by Glu323.

The protein belongs to the mandelate racemase/muconate lactonizing enzyme family. The cofactor is Mn(2+).

It carries out the reaction 2-[(2R)-2-chloro-2,5-dihydro-5-oxofuryl]acetate = 3-chloro-cis,cis-muconate + H(+). The protein operates within aromatic compound metabolism; 3-chlorocatechol degradation. Highly active toward chlorinated substrates but retains diminished activity toward the non-chlorinated substrates. This chain is Chloromuconate cycloisomerase (clcB), found in Pseudomonas putida (Arthrobacter siderocapsulatus).